The sequence spans 216 residues: MOB kinase activator 3B (216 aa).

Positions 82, 87, 164, and 169 each coordinate Zn(2+).

It belongs to the MOB1/phocein family.

Its function is as follows. Modulates LATS1 expression in the Hippo signaling pathway which plays a pivotal role in organ size control and tumor suppression by restricting proliferation and promoting apoptosis. The polypeptide is MOB kinase activator 3B (Homo sapiens (Human)).